The following is a 562-amino-acid chain: Wee1-like protein kinase 2 (562 aa).

2 disordered regions span residues 1 to 86 and 161 to 181; these read MRTA…DKGV and YRQANFHPNGKRKERPEDDCS. The segment covering 35–48 has biased composition (polar residues); that stretch reads HSNQRGSPVNSWRA. The region spanning 217–491 is the Protein kinase domain; it reads FLEIEKIGAG…AKNSLLRRCV (275 aa). ATP-binding positions include 223–231 and K246; that span reads IGAGEFGSV. Residue D344 is the Proton acceptor of the active site. Mg(2+) contacts are provided by N349 and D381. Residues 494–520 are a coiled coil; the sequence is AAQLQKQLNVEKFKTAMLERELKAAKL.

The protein belongs to the protein kinase superfamily. Ser/Thr protein kinase family. WEE1 subfamily.

The protein resides in the nucleus. The enzyme catalyses L-tyrosyl-[protein] + ATP = O-phospho-L-tyrosyl-[protein] + ADP + H(+). Functionally, oocyte-specific protein tyrosine kinase that phosphorylates and inhibits cdk1 and acts as a regulator of meiosis. Required to maintain meiotic arrest in oocytes by phosphorylating cdk1 at 'Tyr-15', leading to inhibit cdk1 activity and prevent meiotic reentry. The polypeptide is Wee1-like protein kinase 2 (wee2) (Xenopus tropicalis (Western clawed frog)).